Here is a 61-residue protein sequence, read N- to C-terminus: Protein translocase subunit SecE (61 aa).

Residues 39-59 (VGIIIIGLIGFILSIVSQVLF) form a helical membrane-spanning segment.

It belongs to the SecE/SEC61-gamma family. In terms of assembly, component of the Sec protein translocase complex. Heterotrimer consisting of SecY (alpha), SecG (beta) and SecE (gamma) subunits. The heterotrimers can form oligomers, although 1 heterotrimer is thought to be able to translocate proteins. Interacts with the ribosome. May interact with SecDF, and other proteins may be involved.

It localises to the cell membrane. Functionally, essential subunit of the Sec protein translocation channel SecYEG. Clamps together the 2 halves of SecY. May contact the channel plug during translocation. The polypeptide is Protein translocase subunit SecE (Methanosphaera stadtmanae (strain ATCC 43021 / DSM 3091 / JCM 11832 / MCB-3)).